A 1052-amino-acid chain; its full sequence is Membrane-bound transcription factor site-1 protease (1052 aa).

Residues methionine 1–glycine 17 form the signal peptide. A propeptide spanning residues lysine 18–leucine 186 is cleaved from the precursor. Asparagine 148 carries N-linked (GlcNAc...) asparagine glycosylation. Serine 168 carries the phosphoserine modification. The Lumenal portion of the chain corresponds to arginine 187–glycine 999. In terms of domain architecture, Peptidase S8 spans proline 190–tyrosine 472. Catalysis depends on aspartate 218, which acts as the Charge relay system. The N-linked (GlcNAc...) asparagine glycan is linked to asparagine 236. Residue histidine 249 is the Charge relay system of the active site. N-linked (GlcNAc...) asparagine glycosylation is present at asparagine 305. Serine 414 functions as the Charge relay system in the catalytic mechanism. Residues asparagine 515 and asparagine 728 are each glycosylated (N-linked (GlcNAc...) asparagine). A compositionally biased stretch (polar residues) spans proline 877–arginine 887. Residues proline 877–methionine 900 are disordered. Asparagine 939 carries an N-linked (GlcNAc...) asparagine glycan. The helical transmembrane segment at glutamine 1000–serine 1022 threads the bilayer. Over lysine 1023–valine 1052 the chain is Cytoplasmic. Residues serine 1026–arginine 1037 are compositionally biased toward basic residues. Residues serine 1026–valine 1052 are disordered.

The protein belongs to the peptidase S8 family. Interacts with LYSET; this interaction bridges GNPTAB to MBTPS1. It depends on Ca(2+) as a cofactor. The 148 kDa zymogen is processed progressively into two membrane-bound 120 and 106 kDa forms in the endoplasmic reticulum, and late into a secreted 98 kDa form. The propeptide is autocatalytically removed through an intramolecular cleavage after Leu-186. Further cleavage generates 14, 10, and 8 kDa intermediates. As to expression, widely expressed. In adult rat, highly expressed in anterior pituitary, thyroid and adrenal glands and in liver. In 2-day old rat, detected in developing skin, striated muscles, cardiac muscles, bones, teeth and internal organs. Highly expressed in retina, cerebellum, pituitary, submaxillary, thyroid and adrenal glands, molars, thymus, kidney and intestine.

It is found in the endoplasmic reticulum membrane. It localises to the golgi apparatus membrane. The enzyme catalyses Processes precursors containing basic and hydrophobic/aliphatic residues at P4 and P2, respectively, with a relatively relaxed acceptance of amino acids at P1 and P3.. Its activity is regulated as follows. Inhibited by divalent copper and zinc ions, but not by nickel or cobalt. Inhibited by its prosegment, but not smaller fragments. Inhibited by 4-(2-aminoethyl)benzenesulfonyl fluoride (AEBSF), a serine protease inhibitor. Functionally, serine protease that cleaves after hydrophobic or small residues, provided that Arg or Lys is in position P4: known substrates include SREBF1/SREBP1, SREBF2/SREBP2, BDNF, GNPTAB, ATF6, ATF6B and FAM20C. Cleaves substrates after Arg-Ser-Val-Leu (SREBP2), Arg-His-Leu-Leu (ATF6), Arg-Gly-Leu-Thr (BDNF) and its own propeptide after Arg-Arg-Leu-Leu. Catalyzes the first step in the proteolytic activation of the sterol regulatory element-binding proteins (SREBPs) SREBF1/SREBP1 and SREBF2/SREBP2. Also mediates the first step in the proteolytic activation of the cyclic AMP-dependent transcription factor ATF-6 (ATF6 and ATF6B). Mediates the protein cleavage of GNPTAB into subunit alpha and beta, thereby participating in biogenesis of lysosomes. Cleaves the propeptide from FAM20C which is required for FAM20C secretion from the Golgi apparatus membrane and for enhancement of FAM20C kinase activity, promoting osteoblast differentiation and biomineralization. Involved in the regulation of M6P-dependent Golgi-to-lysosome trafficking of lysosomal enzymes. It is required for the activation of CREB3L2/BBF2H7, a transcriptional activator of MIA3/TANGO and other genes controlling mega vesicle formation. Therefore, it plays a key role in the regulation of mega vesicle-mediated collagen trafficking. In astrocytes and osteoblasts, upon DNA damage and ER stress, mediates the first step of the regulated intramembrane proteolytic activation of the transcription factor CREB3L1, leading to the inhibition of cell-cycle progression. This Rattus norvegicus (Rat) protein is Membrane-bound transcription factor site-1 protease (Mbtps1).